The sequence spans 122 residues: Glucagon-2 (122 aa).

An N-terminal signal peptide occupies residues 1-21; that stretch reads MTSLHSLAGLLLLMIIQSSWQ. Propeptides lie at residues 83–86 and glutamate 122; that span reads NGLF.

The protein belongs to the glucagon family.

It localises to the secreted. Functionally, promotes hydrolysis of glycogen and lipids, and raises the blood sugar level. The sequence is that of Glucagon-2 (gcg2) from Lophius americanus (American angler).